Consider the following 318-residue polypeptide: Beta-sarcoglycan (318 aa).

Residues 1–32 (MAAAAAAAAEQQSSNGPVKKSMREKAVERRSV) form a disordered region. Residues 1–65 (MAAAAAAAAE…GLRGRKGNLA (65 aa)) lie on the Cytoplasmic side of the membrane. Positions 21 to 32 (SMREKAVERRSV) are enriched in basic and acidic residues. A helical; Signal-anchor for type II membrane protein membrane pass occupies residues 66 to 86 (ICVIILLFILAVINLIITLVI). Residues 87–318 (WAVIRIGPNG…ISDNPCGNTH (232 aa)) are Extracellular-facing. N-linked (GlcNAc...) asparagine glycans are attached at residues asparagine 158, asparagine 211, and asparagine 258. Disulfide bonds link cysteine 288–cysteine 314 and cysteine 290–cysteine 307.

It belongs to the sarcoglycan beta/delta/gamma/zeta family. As to quaternary structure, cross-link to form 2 major subcomplexes: one consisting of SGCB, SGCD and SGCG and the other consisting of SGCB and SGCD. The association between SGCB and SGCG is particularly strong while SGCA is loosely associated with the other sarcoglycans. Post-translationally, disulfide bonds are present. In terms of tissue distribution, highest expression in heart and skeletal muscle. Low expression in brain, kidney, placenta, pancreas and lung. High expression in fetal brain. Also found in fetal lung, kidney and liver.

Its subcellular location is the cell membrane. The protein localises to the sarcolemma. It is found in the cytoplasm. It localises to the cytoskeleton. Functionally, component of the sarcoglycan complex, a subcomplex of the dystrophin-glycoprotein complex which forms a link between the F-actin cytoskeleton and the extracellular matrix. The chain is Beta-sarcoglycan (SGCB) from Homo sapiens (Human).